Reading from the N-terminus, the 566-residue chain is Developmental regulatory protein wetA (566 aa).

Disordered stretches follow at residues 116-174 (VPAV…LMRP), 232-316 (STEG…SDSL), 334-364 (AWWPSMPSRVPRQPSYQHVVSSPAPQRSIQS), 381-400 (SSFDGSTSADPSFSSVVTSA), and 429-542 (PPVQ…RRRK). Composition is skewed to polar residues over residues 165–174 (QSFSPSLMRP) and 269–291 (AQQQQHNYLSQSNNSTMATSSPP). Residues 298-316 (SSPHSSDPQSLSSWHSDSL) show a composition bias toward low complexity. 2 stretches are compositionally biased toward polar residues: residues 347–364 (PSYQHVVSSPAPQRSIQS) and 381–398 (SSFDGSTSADPSFSSVVT). A compositionally biased stretch (low complexity) spans 435-448 (SRSPSLSPRGRGSP). A compositionally biased stretch (polar residues) spans 449-462 (TQGSPLRNEASTKT). Over residues 463–473 (SPHRRGYHGRK) the composition is skewed to basic residues. The segment covering 482–500 (PKPVKGPNSSSPGSGSNKS) has biased composition (low complexity). Residues 501 to 511 (LTVSFVNFTPN) are compositionally biased toward polar residues.

This sequence belongs to the wetA family.

Its function is as follows. BrlA, abaA and wetA are pivotal regulators of conidiophore development and conidium maturation. They act individually and together to regulate their own expression and that of numerous other sporulation-specific genes. Plays an essential role in the completion of conidial maturation and is essential for trehalose biogenesis in conidia. Negatively regulates expression of the melanin biosynthetic gene cluster. Also plays an a role in the early phase of fungal growth including proper hyphal branching. The sequence is that of Developmental regulatory protein wetA from Aspergillus fumigatus (strain ATCC MYA-4609 / CBS 101355 / FGSC A1100 / Af293) (Neosartorya fumigata).